Reading from the N-terminus, the 70-residue chain is uncharacterized protein (70 aa).

The helical transmembrane segment at 50-70 threads the bilayer; sequence FYLLVFFIILWVSREAFFYLI.

Belongs to the M.jannaschii MJ0023/MJ0349/MJ1072/MJ1074/MJ1107/MJECL16 family.

It is found in the membrane. This is an uncharacterized protein from Methanocaldococcus jannaschii (strain ATCC 43067 / DSM 2661 / JAL-1 / JCM 10045 / NBRC 100440) (Methanococcus jannaschii).